A 1715-amino-acid polypeptide reads, in one-letter code: Pentafunctional AROM polypeptide (1715 aa).

Positions Met1 to Pro17 are enriched in polar residues. A disordered region spans residues Met1–Asp26. The interval Met1–Asp421 is 3-dehydroquinate synthase. NAD(+) is bound by residues Asp71 to Asn73, Glu112 to Lys115, Gly143 to Val145, and Asp148. Arg159 contributes to the 7-phospho-2-dehydro-3-deoxy-D-arabino-heptonate binding site. Thr168–Thr169 is an NAD(+) binding site. 7-phospho-2-dehydro-3-deoxy-D-arabino-heptonate contacts are provided by Asp175 and Lys181. Lys190 is an NAD(+) binding site. Asn191 lines the 7-phospho-2-dehydro-3-deoxy-D-arabino-heptonate pocket. Residues Trp208 to Thr211 and Asn219 each bind NAD(+). Glu223 serves as a coordination point for Zn(2+). 7-phospho-2-dehydro-3-deoxy-D-arabino-heptonate is bound by residues Glu223 to Lys226 and Lys287. Residue Glu297 is the Proton acceptor; for 3-dehydroquinate synthase activity of the active site. Residues Arg301 to Asn305 and His308 each bind 7-phospho-2-dehydro-3-deoxy-D-arabino-heptonate. Residue His308 participates in Zn(2+) binding. His312 acts as the Proton acceptor; for 3-dehydroquinate synthase activity in catalysis. 7-phospho-2-dehydro-3-deoxy-D-arabino-heptonate is bound by residues His324 and Lys393. His324 serves as a coordination point for Zn(2+). The interval Val434–Ile895 is EPSP synthase. Catalysis depends on Cys877, which acts as the For EPSP synthase activity. Residues His948–Ser1165 are shikimate kinase. An ATP-binding site is contributed by Gly955 to Thr962. Positions Leu1166 to Gln1389 are 3-dehydroquinase. The Proton acceptor; for 3-dehydroquinate dehydratase activity role is filled by His1292. Lys1320 (schiff-base intermediate with substrate; for 3-dehydroquinate dehydratase activity) is an active-site residue. Residues Ala1402–Cys1715 are shikimate dehydrogenase.

In the N-terminal section; belongs to the sugar phosphate cyclases superfamily. Dehydroquinate synthase family. The protein in the 2nd section; belongs to the EPSP synthase family. This sequence in the 3rd section; belongs to the shikimate kinase family. It in the 4th section; belongs to the type-I 3-dehydroquinase family. In the C-terminal section; belongs to the shikimate dehydrogenase family. In terms of assembly, homodimer. Requires Zn(2+) as cofactor.

Its subcellular location is the cytoplasm. It catalyses the reaction 7-phospho-2-dehydro-3-deoxy-D-arabino-heptonate = 3-dehydroquinate + phosphate. The catalysed reaction is 3-dehydroquinate = 3-dehydroshikimate + H2O. The enzyme catalyses shikimate + NADP(+) = 3-dehydroshikimate + NADPH + H(+). It carries out the reaction shikimate + ATP = 3-phosphoshikimate + ADP + H(+). It catalyses the reaction 3-phosphoshikimate + phosphoenolpyruvate = 5-O-(1-carboxyvinyl)-3-phosphoshikimate + phosphate. It functions in the pathway metabolic intermediate biosynthesis; chorismate biosynthesis; chorismate from D-erythrose 4-phosphate and phosphoenolpyruvate: step 2/7. Its pathway is metabolic intermediate biosynthesis; chorismate biosynthesis; chorismate from D-erythrose 4-phosphate and phosphoenolpyruvate: step 3/7. It participates in metabolic intermediate biosynthesis; chorismate biosynthesis; chorismate from D-erythrose 4-phosphate and phosphoenolpyruvate: step 4/7. The protein operates within metabolic intermediate biosynthesis; chorismate biosynthesis; chorismate from D-erythrose 4-phosphate and phosphoenolpyruvate: step 5/7. It functions in the pathway metabolic intermediate biosynthesis; chorismate biosynthesis; chorismate from D-erythrose 4-phosphate and phosphoenolpyruvate: step 6/7. Functionally, the AROM polypeptide catalyzes 5 consecutive enzymatic reactions in prechorismate polyaromatic amino acid biosynthesis. This chain is Pentafunctional AROM polypeptide, found in Mycosarcoma maydis (Corn smut fungus).